The primary structure comprises 56 residues: Large ribosomal subunit protein bL32c (56 aa).

This sequence belongs to the bacterial ribosomal protein bL32 family.

Its subcellular location is the plastid. It is found in the chloroplast. This chain is Large ribosomal subunit protein bL32c, found in Platanus occidentalis (Sycamore).